The following is a 124-amino-acid chain: Aspartate 1-decarboxylase (124 aa).

Ser-21 acts as the Schiff-base intermediate with substrate; via pyruvic acid in catalysis. Ser-21 is subject to Pyruvic acid (Ser). Thr-53 is a substrate binding site. The Proton donor role is filled by Tyr-54. 69–71 (GAA) contributes to the substrate binding site.

The protein belongs to the PanD family. As to quaternary structure, heterooctamer of four alpha and four beta subunits. Pyruvate serves as cofactor. In terms of processing, is synthesized initially as an inactive proenzyme, which is activated by self-cleavage at a specific serine bond to produce a beta-subunit with a hydroxyl group at its C-terminus and an alpha-subunit with a pyruvoyl group at its N-terminus.

The protein localises to the cytoplasm. The catalysed reaction is L-aspartate + H(+) = beta-alanine + CO2. It functions in the pathway cofactor biosynthesis; (R)-pantothenate biosynthesis; beta-alanine from L-aspartate: step 1/1. Its function is as follows. Catalyzes the pyruvoyl-dependent decarboxylation of aspartate to produce beta-alanine. In Dehalococcoides mccartyi (strain CBDB1), this protein is Aspartate 1-decarboxylase.